The sequence spans 120 residues: Ribonuclease P protein component (120 aa).

This sequence belongs to the RnpA family. Consists of a catalytic RNA component (M1 or rnpB) and a protein subunit.

It carries out the reaction Endonucleolytic cleavage of RNA, removing 5'-extranucleotides from tRNA precursor.. In terms of biological role, RNaseP catalyzes the removal of the 5'-leader sequence from pre-tRNA to produce the mature 5'-terminus. It can also cleave other RNA substrates such as 4.5S RNA. The protein component plays an auxiliary but essential role in vivo by binding to the 5'-leader sequence and broadening the substrate specificity of the ribozyme. This is Ribonuclease P protein component from Chelativorans sp. (strain BNC1).